The following is a 237-amino-acid chain: Leucyl/phenylalanyl-tRNA--protein transferase (237 aa).

The protein belongs to the L/F-transferase family.

It localises to the cytoplasm. It catalyses the reaction N-terminal L-lysyl-[protein] + L-leucyl-tRNA(Leu) = N-terminal L-leucyl-L-lysyl-[protein] + tRNA(Leu) + H(+). The enzyme catalyses N-terminal L-arginyl-[protein] + L-leucyl-tRNA(Leu) = N-terminal L-leucyl-L-arginyl-[protein] + tRNA(Leu) + H(+). The catalysed reaction is L-phenylalanyl-tRNA(Phe) + an N-terminal L-alpha-aminoacyl-[protein] = an N-terminal L-phenylalanyl-L-alpha-aminoacyl-[protein] + tRNA(Phe). Its function is as follows. Functions in the N-end rule pathway of protein degradation where it conjugates Leu, Phe and, less efficiently, Met from aminoacyl-tRNAs to the N-termini of proteins containing an N-terminal arginine or lysine. This Photobacterium profundum (strain SS9) protein is Leucyl/phenylalanyl-tRNA--protein transferase.